The chain runs to 202 residues: FMN reductase (NADH) RutF (202 aa).

A compositionally biased stretch (low complexity) spans 168–191 (PRAPRGGSAPAEPARGARAIGARP). Positions 168 to 202 (PRAPRGGSAPAEPARGARAIGARPPEGPVLALRSA) are disordered.

The protein belongs to the non-flavoprotein flavin reductase family. RutF subfamily.

The enzyme catalyses FMNH2 + NAD(+) = FMN + NADH + 2 H(+). Functionally, catalyzes the reduction of FMN to FMNH2 which is used to reduce pyrimidine by RutA via the Rut pathway. The chain is FMN reductase (NADH) RutF from Methylorubrum populi (strain ATCC BAA-705 / NCIMB 13946 / BJ001) (Methylobacterium populi).